Reading from the N-terminus, the 264-residue chain is S-adenosylmethionine decarboxylase proenzyme (264 aa).

Ser-112 functions as the Schiff-base intermediate with substrate; via pyruvic acid in the catalytic mechanism. Pyruvic acid (Ser); by autocatalysis is present on Ser-112. His-117 (proton acceptor; for processing activity) is an active-site residue. Catalysis depends on Cys-140, which acts as the Proton donor; for catalytic activity.

Belongs to the prokaryotic AdoMetDC family. Type 2 subfamily. As to quaternary structure, heterooctamer of four alpha and four beta chains arranged as a tetramer of alpha/beta heterodimers. The cofactor is pyruvate. In terms of processing, is synthesized initially as an inactive proenzyme. Formation of the active enzyme involves a self-maturation process in which the active site pyruvoyl group is generated from an internal serine residue via an autocatalytic post-translational modification. Two non-identical subunits are generated from the proenzyme in this reaction, and the pyruvate is formed at the N-terminus of the alpha chain, which is derived from the carboxyl end of the proenzyme. The post-translation cleavage follows an unusual pathway, termed non-hydrolytic serinolysis, in which the side chain hydroxyl group of the serine supplies its oxygen atom to form the C-terminus of the beta chain, while the remainder of the serine residue undergoes an oxidative deamination to produce ammonia and the pyruvoyl group blocking the N-terminus of the alpha chain.

The enzyme catalyses S-adenosyl-L-methionine + H(+) = S-adenosyl 3-(methylsulfanyl)propylamine + CO2. It functions in the pathway amine and polyamine biosynthesis; S-adenosylmethioninamine biosynthesis; S-adenosylmethioninamine from S-adenosyl-L-methionine: step 1/1. Its function is as follows. Catalyzes the decarboxylation of S-adenosylmethionine to S-adenosylmethioninamine (dcAdoMet), the propylamine donor required for the synthesis of the polyamines spermine and spermidine from the diamine putrescine. This chain is S-adenosylmethionine decarboxylase proenzyme, found in Yersinia enterocolitica serotype O:8 / biotype 1B (strain NCTC 13174 / 8081).